Consider the following 319-residue polypeptide: Transcriptional regulator LsrR (319 aa).

The segment at residues 32–55 (QSEISERLGLTRLKVSRLLEKGHQ) is a DNA-binding region (H-T-H motif).

It belongs to the SorC transcriptional regulatory family.

It is found in the cytoplasm. Its activity is regulated as follows. Inactivated by phosphorylated autoinducer-2 (phospho-AI-2). Phospho-AI-2 acts by binding to LsrR, which is then unable to bind to the promoter regions, allowing the transcription of the target genes. Its function is as follows. Transcriptional regulator that represses the expression of the lsr operon in the absence of the quorum-sensing signaling molecule autoinducer 2 (AI-2). It also represses the expression of the lsrRK operon. Acts by binding to the intergenic region between the lsr operon and lsrR. In the presence of phosphorylated autoinducer-2 (phospho-AI-2), LsrR is inactivated, leading to the transcription of the genes. This chain is Transcriptional regulator LsrR (lsrR), found in Salmonella choleraesuis (strain SC-B67).